The sequence spans 118 residues: Small ribosomal subunit protein uS13 (118 aa).

The disordered stretch occupies residues 93 to 118 (KGLPVRGQRTKTNARTRKGPRKPIRK).

Belongs to the universal ribosomal protein uS13 family. Part of the 30S ribosomal subunit. Forms a loose heterodimer with protein S19. Forms two bridges to the 50S subunit in the 70S ribosome.

Functionally, located at the top of the head of the 30S subunit, it contacts several helices of the 16S rRNA. In the 70S ribosome it contacts the 23S rRNA (bridge B1a) and protein L5 of the 50S subunit (bridge B1b), connecting the 2 subunits; these bridges are implicated in subunit movement. Contacts the tRNAs in the A and P-sites. In Ectopseudomonas mendocina (strain ymp) (Pseudomonas mendocina), this protein is Small ribosomal subunit protein uS13.